The sequence spans 569 residues: Arginine--tRNA ligase (569 aa).

A 'HIGH' region motif is present at residues 123–133; sequence PNIAKRMHIGH.

Belongs to the class-I aminoacyl-tRNA synthetase family. Monomer.

It localises to the cytoplasm. It catalyses the reaction tRNA(Arg) + L-arginine + ATP = L-arginyl-tRNA(Arg) + AMP + diphosphate. The polypeptide is Arginine--tRNA ligase (Fusobacterium nucleatum subsp. nucleatum (strain ATCC 25586 / DSM 15643 / BCRC 10681 / CIP 101130 / JCM 8532 / KCTC 2640 / LMG 13131 / VPI 4355)).